The chain runs to 189 residues: Peptidyl-tRNA hydrolase (189 aa).

Residue Y14 coordinates tRNA. Catalysis depends on H19, which acts as the Proton acceptor. F64, N66, and N112 together coordinate tRNA.

Belongs to the PTH family. Monomer.

It is found in the cytoplasm. It catalyses the reaction an N-acyl-L-alpha-aminoacyl-tRNA + H2O = an N-acyl-L-amino acid + a tRNA + H(+). In terms of biological role, hydrolyzes ribosome-free peptidyl-tRNAs (with 1 or more amino acids incorporated), which drop off the ribosome during protein synthesis, or as a result of ribosome stalling. Its function is as follows. Catalyzes the release of premature peptidyl moieties from peptidyl-tRNA molecules trapped in stalled 50S ribosomal subunits, and thus maintains levels of free tRNAs and 50S ribosomes. The chain is Peptidyl-tRNA hydrolase from Zymomonas mobilis subsp. mobilis (strain ATCC 31821 / ZM4 / CP4).